Reading from the N-terminus, the 285-residue chain is NAD kinase (285 aa).

Asp66 (proton acceptor) is an active-site residue. NAD(+) is bound by residues 66-67 (DG), 137-138 (ND), Arg148, Arg165, Asp167, and 178-183 (TAYSLS).

This sequence belongs to the NAD kinase family. A divalent metal cation serves as cofactor.

The protein localises to the cytoplasm. The catalysed reaction is NAD(+) + ATP = ADP + NADP(+) + H(+). In terms of biological role, involved in the regulation of the intracellular balance of NAD and NADP, and is a key enzyme in the biosynthesis of NADP. Catalyzes specifically the phosphorylation on 2'-hydroxyl of the adenosine moiety of NAD to yield NADP. This is NAD kinase from Chlorobium phaeobacteroides (strain BS1).